Here is a 393-residue protein sequence, read N- to C-terminus: NAD(P)H-quinone oxidoreductase subunit H, chloroplastic (393 aa).

The protein belongs to the complex I 49 kDa subunit family. In terms of assembly, NDH is composed of at least 16 different subunits, 5 of which are encoded in the nucleus.

The protein localises to the plastid. Its subcellular location is the chloroplast thylakoid membrane. It carries out the reaction a plastoquinone + NADH + (n+1) H(+)(in) = a plastoquinol + NAD(+) + n H(+)(out). It catalyses the reaction a plastoquinone + NADPH + (n+1) H(+)(in) = a plastoquinol + NADP(+) + n H(+)(out). In terms of biological role, NDH shuttles electrons from NAD(P)H:plastoquinone, via FMN and iron-sulfur (Fe-S) centers, to quinones in the photosynthetic chain and possibly in a chloroplast respiratory chain. The immediate electron acceptor for the enzyme in this species is believed to be plastoquinone. Couples the redox reaction to proton translocation, and thus conserves the redox energy in a proton gradient. In Chlorokybus atmophyticus (Soil alga), this protein is NAD(P)H-quinone oxidoreductase subunit H, chloroplastic.